A 282-amino-acid chain; its full sequence is NADPH-dependent 7-cyano-7-deazaguanine reductase (282 aa).

A substrate-binding site is contributed by 88–90; sequence IES. An NADPH-binding site is contributed by 90 to 91; sequence SK. Residue C190 is the Thioimide intermediate of the active site. The active-site Proton donor is the D197. 229–230 provides a ligand contact to substrate; sequence HE. 258-259 contributes to the NADPH binding site; it reads RG.

It belongs to the GTP cyclohydrolase I family. QueF type 2 subfamily. As to quaternary structure, homodimer.

The protein localises to the cytoplasm. The catalysed reaction is 7-aminomethyl-7-carbaguanine + 2 NADP(+) = 7-cyano-7-deazaguanine + 2 NADPH + 3 H(+). It functions in the pathway tRNA modification; tRNA-queuosine biosynthesis. Functionally, catalyzes the NADPH-dependent reduction of 7-cyano-7-deazaguanine (preQ0) to 7-aminomethyl-7-deazaguanine (preQ1). In Salmonella arizonae (strain ATCC BAA-731 / CDC346-86 / RSK2980), this protein is NADPH-dependent 7-cyano-7-deazaguanine reductase.